Consider the following 750-residue polypeptide: Photosystem I P700 chlorophyll a apoprotein A1 (750 aa).

The next 8 membrane-spanning stretches (helical) occupy residues 70–93, 156–179, 195–219, 291–309, 346–369, 385–411, 433–455, and 531–549; these read VFSAHFGQLSIIFLWLSGMYFHGA, LYCTAIGALVFAALMLFAGWFHYH, LNHHLAGLLGLGSLSWAGHQVHVSL, IAHHHLAIAILFLIAGHMY, WHAQLSLNLAMLGSLTIVVAHHMY, LSLFTHHMWIGGFLIVGAAAHAAIFMV, AIISHLNWACIFLGFHSFGLYIH, and FLVHHIHAFTIHVTVLILL. The [4Fe-4S] cluster site is built by cysteine 573 and cysteine 582. 2 helical membrane passes run 589-610 and 664-686; these read HVFLGLFWMYNSISVVIFHFSW and LSAYGLFFLGAHFVWAFSLMFLF. Histidine 675 provides a ligand contact to chlorophyll a'. Methionine 683 and tyrosine 691 together coordinate chlorophyll a. Residue tryptophan 692 participates in phylloquinone binding. A helical membrane pass occupies residues 724–744; it reads AVGVTHYLLGGIATTWAFFLA.

It belongs to the PsaA/PsaB family. As to quaternary structure, the PsaA/B heterodimer binds the P700 chlorophyll special pair and subsequent electron acceptors. PSI consists of a core antenna complex that captures photons, and an electron transfer chain that converts photonic excitation into a charge separation. The eukaryotic PSI reaction center is composed of at least 11 subunits. Requires P700 is a chlorophyll a/chlorophyll a' dimer, A0 is one or more chlorophyll a, A1 is one or both phylloquinones and FX is a shared 4Fe-4S iron-sulfur center. as cofactor.

The protein resides in the plastid. It is found in the chloroplast thylakoid membrane. It catalyses the reaction reduced [plastocyanin] + hnu + oxidized [2Fe-2S]-[ferredoxin] = oxidized [plastocyanin] + reduced [2Fe-2S]-[ferredoxin]. Functionally, psaA and PsaB bind P700, the primary electron donor of photosystem I (PSI), as well as the electron acceptors A0, A1 and FX. PSI is a plastocyanin-ferredoxin oxidoreductase, converting photonic excitation into a charge separation, which transfers an electron from the donor P700 chlorophyll pair to the spectroscopically characterized acceptors A0, A1, FX, FA and FB in turn. Oxidized P700 is reduced on the lumenal side of the thylakoid membrane by plastocyanin. The chain is Photosystem I P700 chlorophyll a apoprotein A1 from Vitis vinifera (Grape).